A 460-amino-acid chain; its full sequence is Lipase member H-B (460 aa).

An N-terminal signal peptide occupies residues 1-26 (MLLSFYFNGLLLVGCLLSWGRSDTEG). N-linked (GlcNAc...) asparagine glycans are attached at residues Asn67 and Asn75. Catalysis depends on Ser163, which acts as the Nucleophile. A glycan (N-linked (GlcNAc...) asparagine) is linked at Asn177. Residue Asp187 is the Charge relay system of the active site. The cysteines at positions 242 and 255 are disulfide-linked. Catalysis depends on His257, which acts as the Charge relay system. 2 cysteine pairs are disulfide-bonded: Cys279–Cys290 and Cys293–Cys301. Residue Asn289 is glycosylated (N-linked (GlcNAc...) asparagine). N-linked (GlcNAc...) asparagine glycosylation occurs at Asn366. Cys436 and Cys455 are oxidised to a cystine.

It belongs to the AB hydrolase superfamily. Lipase family.

It is found in the secreted. The protein localises to the cell membrane. The enzyme catalyses 1-hexadecanoyl-2-(9Z-octadecenoyl)-sn-glycero-3-phosphate + H2O = 2-(9Z-octadecenoyl)-sn-glycero-3-phosphate + hexadecanoate + H(+). Hydrolyzes specifically phosphatidic acid (PA) to produce 2-acyl lysophosphatidic acid (LPA; a potent bioactive lipid mediator) and fatty acid. Does not hydrolyze other phospholipids, like phosphatidylserine (PS), phosphatidylcholine (PC) and phosphatidylethanolamine (PE) or triacylglycerol (TG). This Xenopus laevis (African clawed frog) protein is Lipase member H-B (liph-b).